The sequence spans 1108 residues: Multidrug resistance regulator 1 (1108 aa).

Residues 1–19 (MSIATTPIETPKSPKSTEP) are compositionally biased toward polar residues. A disordered region spans residues 1-27 (MSIATTPIETPKSPKSTEPQVRKRKKV). Positions 31 to 59 (CTNCRKRKIRCDRQHPCNNCIKSKKHNAC) form a DNA-binding region, zn(2)-C6 fungal-type. A compositionally biased stretch (polar residues) spans 68–83 (PANFSTNGSSHGNTVP). 3 disordered regions span residues 68–138 (PANF…SENE), 968–990 (DQTY…LDSR), and 1021–1064 (AQQQ…YYGN). Composition is skewed to basic and acidic residues over residues 86–104 (RPYE…EAPR) and 114–123 (NERKNSKKSP). The segment covering 124–138 (DNTVANNQQTASENE) has biased composition (polar residues). Positions 134–165 (ASENEVTITLSELNMLKQRLQNIEANINAQSN) form a coiled coil. Composition is skewed to low complexity over residues 970–980 (TYSTSSESSST) and 1023–1041 (QQRQ…QSQS).

It is found in the nucleus. Functionally, transcription factor that acts as the central regulator of the MDR1 efflux pump. Other target genes include those encoding oxidoreductases, whose up-regulation in fluconazole-resistant isolates may help to prevent cell damage resulting from the generation of toxic molecules in the presence of fluconazole and thereby contribute to drug resistance. This is Multidrug resistance regulator 1 from Candida albicans (strain SC5314 / ATCC MYA-2876) (Yeast).